The chain runs to 1479 residues: Protein CHROMATIN REMODELING 20 (1479 aa).

Residues 19–49 (EVIVESKEDEMDIIIEENREAEQEVMEVKAR) adopt a coiled-coil conformation. Residues 40–55 (EQEVMEVKARDGRGEQ) are compositionally biased toward basic and acidic residues. The segment at 40–109 (EQEVMEVKAR…DELDLEKPLS (70 aa)) is disordered. The segment covering 76 to 86 (DASSRSESSDF) has biased composition (low complexity). The span at 94–109 (ILSRRDDELDLEKPLS) shows a compositional bias: basic and acidic residues. Positions 109–199 (SEEEIDELIS…EQLDGAGIEL (91 aa)) form a coiled coil. Positions 472-601 (RDDSQNPANN…KKSIELSSDS (130 aa)) constitute an ADD domain. A GATA-type; atypical zinc finger spans residues 483–514 (RCTACNKVAVEVHSHPLLEVIVCMDCKRSIED). The PHD-type; atypical zinc finger occupies 524–577 (ERHCEWCGHIADLIDCRTCEKLFCASCIKRNIGEEYMSEAQSSGWDCCCCSPIP). Positions 578–598 (LQRLTLELEKAMRDKKSIELS) form a coiled coil. Positions 594-615 (SIELSSDSSSDSSSDNNSVDTD) are disordered. Low complexity predominate over residues 598–615 (SSDSSSDSSSDNNSVDTD). In terms of domain architecture, Helicase ATP-binding spans 741-924 (VKSGDKGLGC…YCMVDFVREG (184 aa)). Position 754–761 (754–761 (HTMGLGKT)) interacts with ATP. The DEAH box motif lies at 875 to 878 (DEAH). The region spanning 1122–1290 (DILSMSADVG…QVHRTISKEE (169 aa)) is the Helicase C-terminal domain. Residues 1400–1423 (SESPVVPKPSPSTQTEPLPQPKGF) form a disordered region.

Belongs to the SNF2/RAD54 helicase family.

It localises to the nucleus. The protein localises to the chromosome. It is found in the telomere. Involved in transcriptional regulation and chromatin remodeling. Facilitates DNA replication in multiple cellular environments and is required for efficient replication of a subset of genomic loci. Binds to DNA tandem repeat sequences in both telomeres and euchromatin and in vitro binds DNA quadruplex structures. May help stabilizing G-rich regions into regular chromatin structures by remodeling G4 DNA and incorporating H3.3-containing nucleosomes. Involved in DNA repair of gamma-irradiation-mediated damages. The polypeptide is Protein CHROMATIN REMODELING 20 (Arabidopsis thaliana (Mouse-ear cress)).